The primary structure comprises 397 residues: Acetate kinase (397 aa).

Mg(2+) is bound at residue Asn7. Lys14 is an ATP binding site. Residue Arg91 participates in substrate binding. The Proton donor/acceptor role is filled by Asp148. ATP contacts are provided by residues 208-212 (HLGNG), 283-285 (DLR), and 331-335 (GVGEN). A Mg(2+)-binding site is contributed by Glu384.

The protein belongs to the acetokinase family. As to quaternary structure, homodimer. Mg(2+) serves as cofactor. It depends on Mn(2+) as a cofactor.

Its subcellular location is the cytoplasm. The catalysed reaction is acetate + ATP = acetyl phosphate + ADP. It functions in the pathway metabolic intermediate biosynthesis; acetyl-CoA biosynthesis; acetyl-CoA from acetate: step 1/2. Its function is as follows. Catalyzes the formation of acetyl phosphate from acetate and ATP. Can also catalyze the reverse reaction. The protein is Acetate kinase of Syntrophomonas wolfei subsp. wolfei (strain DSM 2245B / Goettingen).